A 300-amino-acid chain; its full sequence is Pantoate--beta-alanine ligase (300 aa).

43 to 50 (MGYLHSGH) serves as a coordination point for ATP. Residue H50 is the Proton donor of the active site. Q74 is a binding site for (R)-pantoate. Q74 contacts beta-alanine. 162–165 (GQKD) is a binding site for ATP. Q168 lines the (R)-pantoate pocket. ATP-binding positions include I191 and 199 to 202 (KSSR).

The protein belongs to the pantothenate synthetase family. In terms of assembly, homodimer.

It is found in the cytoplasm. It carries out the reaction (R)-pantoate + beta-alanine + ATP = (R)-pantothenate + AMP + diphosphate + H(+). The protein operates within cofactor biosynthesis; (R)-pantothenate biosynthesis; (R)-pantothenate from (R)-pantoate and beta-alanine: step 1/1. Catalyzes the condensation of pantoate with beta-alanine in an ATP-dependent reaction via a pantoyl-adenylate intermediate. In Dictyostelium discoideum (Social amoeba), this protein is Pantoate--beta-alanine ligase (panC).